The chain runs to 263 residues: Thiazole synthase (263 aa).

The active-site Schiff-base intermediate with DXP is the lysine 102. 1-deoxy-D-xylulose 5-phosphate is bound by residues glycine 164, 190–191 (AG), and 212–213 (NT).

Belongs to the ThiG family. Homotetramer. Forms heterodimers with either ThiH or ThiS.

Its subcellular location is the cytoplasm. The catalysed reaction is [ThiS sulfur-carrier protein]-C-terminal-Gly-aminoethanethioate + 2-iminoacetate + 1-deoxy-D-xylulose 5-phosphate = [ThiS sulfur-carrier protein]-C-terminal Gly-Gly + 2-[(2R,5Z)-2-carboxy-4-methylthiazol-5(2H)-ylidene]ethyl phosphate + 2 H2O + H(+). The protein operates within cofactor biosynthesis; thiamine diphosphate biosynthesis. Catalyzes the rearrangement of 1-deoxy-D-xylulose 5-phosphate (DXP) to produce the thiazole phosphate moiety of thiamine. Sulfur is provided by the thiocarboxylate moiety of the carrier protein ThiS. In vitro, sulfur can be provided by H(2)S. This is Thiazole synthase from Helicobacter hepaticus (strain ATCC 51449 / 3B1).